Consider the following 441-residue polypeptide: Ribosomal protein uS12 methylthiotransferase RimO (441 aa).

Residues 7–117 form the MTTase N-terminal domain; that stretch reads PKISFVSLGC…VLEAVHRASP (111 aa). The [4Fe-4S] cluster site is built by Cys16, Cys52, Cys81, Cys148, Cys152, and Cys155. One can recognise a Radical SAM core domain in the interval 134 to 371; that stretch reads LTPRHYAYLK…MARQQKISAR (238 aa). The TRAM domain maps to 374-440; sequence KRKVGTRQQI…EYDLHGTVAG (67 aa).

The protein belongs to the methylthiotransferase family. RimO subfamily. The cofactor is [4Fe-4S] cluster.

The protein resides in the cytoplasm. It catalyses the reaction L-aspartate(89)-[ribosomal protein uS12]-hydrogen + (sulfur carrier)-SH + AH2 + 2 S-adenosyl-L-methionine = 3-methylsulfanyl-L-aspartate(89)-[ribosomal protein uS12]-hydrogen + (sulfur carrier)-H + 5'-deoxyadenosine + L-methionine + A + S-adenosyl-L-homocysteine + 2 H(+). In terms of biological role, catalyzes the methylthiolation of an aspartic acid residue of ribosomal protein uS12. The protein is Ribosomal protein uS12 methylthiotransferase RimO of Bradyrhizobium sp. (strain BTAi1 / ATCC BAA-1182).